The following is a 313-amino-acid chain: tRNA dimethylallyltransferase (313 aa).

Residue 12–19 (GPTASGKS) participates in ATP binding. 14–19 (TASGKS) contacts substrate. Interaction with substrate tRNA stretches follow at residues 37–40 (DSMQ) and 161–165 (QRSIR).

This sequence belongs to the IPP transferase family. As to quaternary structure, monomer. The cofactor is Mg(2+).

The catalysed reaction is adenosine(37) in tRNA + dimethylallyl diphosphate = N(6)-dimethylallyladenosine(37) in tRNA + diphosphate. Functionally, catalyzes the transfer of a dimethylallyl group onto the adenine at position 37 in tRNAs that read codons beginning with uridine, leading to the formation of N6-(dimethylallyl)adenosine (i(6)A). This chain is tRNA dimethylallyltransferase, found in Pelagibacter ubique (strain HTCC1062).